We begin with the raw amino-acid sequence, 519 residues long: Aldehyde dehydrogenase, mitochondrial (519 aa).

The transit peptide at 1–19 (MLRAALSTARRGPRLSRLL) directs the protein to the mitochondrion. An SIFI-degron motif is present at residues 12–26 (GPRLSRLLSAAATSA). Lys-54, Lys-75, Lys-80, and Lys-161 each carry N6-acetyllysine. NAD(+) is bound at residue 264–269 (GSTEVG). The active-site Proton acceptor is the Glu-287. Cys-321 (nucleophile) is an active-site residue. 8 positions are modified to N6-acetyllysine: Lys-370, Lys-377, Lys-385, Lys-409, Lys-428, Lys-430, Lys-443, and Lys-453.

It belongs to the aldehyde dehydrogenase family. As to quaternary structure, homotetramer. Post-translationally, in response to mitochondrial stress, the precursor protein is ubiquitinated by the SIFI complex in the cytoplasm before mitochondrial import, leading to its degradation. Within the SIFI complex, UBR4 initiates ubiquitin chain that are further elongated or branched by KCMF1.

The protein localises to the mitochondrion matrix. The enzyme catalyses an aldehyde + NAD(+) + H2O = a carboxylate + NADH + 2 H(+). The protein operates within alcohol metabolism; ethanol degradation; acetate from ethanol: step 2/2. In terms of biological role, required for clearance of cellular formaldehyde, a cytotoxic and carcinogenic metabolite that induces DNA damage. In Rattus norvegicus (Rat), this protein is Aldehyde dehydrogenase, mitochondrial (Aldh2).